The chain runs to 326 residues: Fos-related antigen 2 (326 aa).

Residue Met-1 is modified to N-acetylmethionine. The segment at Met-1 to Asp-39 is disordered. The span at Phe-9–Ser-19 shows a compositional bias: polar residues. A Glycyl lysine isopeptide (Lys-Gly) (interchain with G-Cter in SUMO2) cross-link involves residue Lys-35. Lys-104 carries the post-translational modification N6-acetyllysine; alternate. Lys-104 is covalently cross-linked (Glycyl lysine isopeptide (Lys-Gly) (interchain with G-Cter in SUMO2); alternate). Disordered stretches follow at residues Gly-111 to Arg-131, Ile-193 to Val-244, and Glu-289 to Leu-326. Ser-120 carries the phosphoserine modification. Residues Glu-124–His-187 form the bZIP domain. The basic motif stretch occupies residues Lys-126–Arg-128. The interval Ile-129–Leu-136 is leucine-zipper. Position 200 is a phosphoserine (Ser-200). Polar residues predominate over residues Pro-201–Gly-211. Residue Lys-222 forms a Glycyl lysine isopeptide (Lys-Gly) (interchain with G-Cter in SUMO2); alternate linkage. Lys-222 participates in a covalent cross-link: Glycyl lysine isopeptide (Lys-Gly) (interchain with G-Cter in SUMO1); alternate. Residue Ser-230 is modified to Phosphoserine. A Glycyl lysine isopeptide (Lys-Gly) (interchain with G-Cter in SUMO2) cross-link involves residue Lys-239. Residues Ser-308 and Ser-320 each carry the phosphoserine modification. Positions Ser-308–Ser-320 are enriched in low complexity.

This sequence belongs to the bZIP family. Fos subfamily. As to quaternary structure, heterodimer. Interacts with the BAF multiprotein chromatin-remodeling complex subunits SMARCB1 and SMARCD1. Interacts with ARID1A and JUN. As to expression, expressed in the brain cortex. Expressed at night in pineal gland (at protein level). Also expressed in osteoblasts (at protein level).

The protein resides in the nucleus. Controls osteoclast survival and size. As a dimer with JUN, activates LIF transcription. Activates CEBPB transcription in PGE2-activated osteoblasts. This is Fos-related antigen 2 (Fosl2) from Rattus norvegicus (Rat).